The primary structure comprises 428 residues: 3-phosphoshikimate 1-carboxyvinyltransferase (428 aa).

3 residues coordinate 3-phosphoshikimate: Lys-21, Ser-22, and Arg-26. Position 21 (Lys-21) interacts with phosphoenolpyruvate. 2 residues coordinate phosphoenolpyruvate: Gly-91 and Arg-119. Positions 164, 166, 313, and 340 each coordinate 3-phosphoshikimate. Residue Gln-166 participates in phosphoenolpyruvate binding. The active-site Proton acceptor is Asp-313. Residues Arg-344 and Arg-386 each coordinate phosphoenolpyruvate.

It belongs to the EPSP synthase family. Monomer.

Its subcellular location is the cytoplasm. The enzyme catalyses 3-phosphoshikimate + phosphoenolpyruvate = 5-O-(1-carboxyvinyl)-3-phosphoshikimate + phosphate. It functions in the pathway metabolic intermediate biosynthesis; chorismate biosynthesis; chorismate from D-erythrose 4-phosphate and phosphoenolpyruvate: step 6/7. Its function is as follows. Catalyzes the transfer of the enolpyruvyl moiety of phosphoenolpyruvate (PEP) to the 5-hydroxyl of shikimate-3-phosphate (S3P) to produce enolpyruvyl shikimate-3-phosphate and inorganic phosphate. This chain is 3-phosphoshikimate 1-carboxyvinyltransferase, found in Campylobacter jejuni subsp. jejuni serotype O:2 (strain ATCC 700819 / NCTC 11168).